Here is a 418-residue protein sequence, read N- to C-terminus: STE20-related kinase adapter protein beta (418 aa).

One can recognise a Protein kinase domain in the interval 58–369 (YELQVEIGRG…ASSLLSHVFF (312 aa)). Residues 64-72 (IGRGFDNLT) and Lys-89 contribute to the ATP site.

This sequence belongs to the protein kinase superfamily. STE Ser/Thr protein kinase family. STE20 subfamily. As to quaternary structure, component of a trimeric complex composed of STK11/LKB1, STRAD (STRADA or STRADB) and CAB39/MO25 (CAB39/MO25alpha or CAB39L/MO25beta): the complex tethers STK11/LKB1 in the cytoplasm and stimulates its catalytic activity. Interacts with BIRC4/XIAP. These two proteins are likely to coexist in a complex with TAK1, TRAF6, TAB1 and TAB2. Highly expressed in heart, skeletal muscle, testis, liver and colon.

Its subcellular location is the nucleus. It localises to the cytoplasm. Its function is as follows. Pseudokinase which, in complex with CAB39/MO25 (CAB39/MO25alpha or CAB39L/MO25beta), binds to and activates STK11/LKB1. Adopts a closed conformation typical of active protein kinases and binds STK11/LKB1 as a pseudosubstrate, promoting conformational change of STK11/LKB1 in an active conformation. This is STE20-related kinase adapter protein beta (STRADB) from Homo sapiens (Human).